The chain runs to 206 residues: Ras-related protein RABG3a (206 aa).

A GTP-binding site is contributed by 15–22; it reads GDSGVGKT. The short motif at 37–45 is the Effector region element; it reads YKATIGADF. Residues 63 to 67, 125 to 128, and 158 to 159 each bind GTP; these read DTAGQ, NKID, and SA. Residues Cys204 and Cys206 are each lipidated (S-geranylgeranyl cysteine). Cys206 bears the Cysteine methyl ester mark.

This sequence belongs to the small GTPase superfamily. Rab family.

The protein localises to the cell membrane. In terms of biological role, intracellular vesicle trafficking and protein transport. This Arabidopsis thaliana (Mouse-ear cress) protein is Ras-related protein RABG3a (RABG3A).